Here is a 248-residue protein sequence, read N- to C-terminus: Probable transcriptional regulatory protein PsycPRwf_1013 (248 aa).

Belongs to the TACO1 family.

The protein localises to the cytoplasm. The chain is Probable transcriptional regulatory protein PsycPRwf_1013 from Psychrobacter sp. (strain PRwf-1).